The primary structure comprises 358 residues: Peptide chain release factor 1 (358 aa).

The residue at position 237 (Q237) is an N5-methylglutamine.

The protein belongs to the prokaryotic/mitochondrial release factor family. In terms of processing, methylated by PrmC. Methylation increases the termination efficiency of RF1.

It localises to the cytoplasm. In terms of biological role, peptide chain release factor 1 directs the termination of translation in response to the peptide chain termination codons UAG and UAA. This Streptomyces avermitilis (strain ATCC 31267 / DSM 46492 / JCM 5070 / NBRC 14893 / NCIMB 12804 / NRRL 8165 / MA-4680) protein is Peptide chain release factor 1.